The chain runs to 413 residues: Gamma-glutamyl phosphate reductase (413 aa).

This sequence belongs to the gamma-glutamyl phosphate reductase family.

The protein resides in the cytoplasm. It catalyses the reaction L-glutamate 5-semialdehyde + phosphate + NADP(+) = L-glutamyl 5-phosphate + NADPH + H(+). The protein operates within amino-acid biosynthesis; L-proline biosynthesis; L-glutamate 5-semialdehyde from L-glutamate: step 2/2. In terms of biological role, catalyzes the NADPH-dependent reduction of L-glutamate 5-phosphate into L-glutamate 5-semialdehyde and phosphate. The product spontaneously undergoes cyclization to form 1-pyrroline-5-carboxylate. The protein is Gamma-glutamyl phosphate reductase of Thermus thermophilus (strain ATCC BAA-163 / DSM 7039 / HB27).